The chain runs to 192 residues: MFGRTLNTFTSRNAPLVRNFDKFIVNNTLTSKNIYLSQTNTTNTPLSYSTQAKKPFTITEKRIDELKTPYQPTSPHLTIYKFPLPAVMSIMHRATGICLALGITGLAGVTLFAPHDAIHYIQLLHTQYPALVYPAKFAVALPLTYHFCTGVRHIIWDETVKGLSISQIESSGKVLLAVVAVLSTIFTFVSFK.

Residues 1 to 27 (MFGRTLNTFTSRNAPLVRNFDKFIVNN) constitute a mitochondrion transit peptide. At 48-83 (YSTQAKKPFTITEKRIDELKTPYQPTSPHLTIYKFP) the chain is on the mitochondrial matrix side. The chain crosses the membrane as a helical span at residues 84–113 (LPAVMSIMHRATGICLALGITGLAGVTLFA). The Mitochondrial intermembrane portion of the chain corresponds to 114–131 (PHDAIHYIQLLHTQYPAL). A helical membrane pass occupies residues 132-156 (VYPAKFAVALPLTYHFCTGVRHIIW). Residue H146 participates in heme b binding. Over 157–164 (DETVKGLS) the chain is Mitochondrial matrix. The helical transmembrane segment at 165 to 186 (ISQIESSGKVLLAVVAVLSTIF) threads the bilayer. Residues 187 to 189 (TFV) lie on the Mitochondrial intermembrane side of the membrane.

This sequence belongs to the cytochrome b560 family. In terms of assembly, component of complex II composed of four subunits: the flavoprotein (FP) sdha, iron-sulfur protein (IP) sdhb, and a cytochrome b560 composed of sdhc and sdhd. The cofactor is heme b.

The protein localises to the mitochondrion inner membrane. It functions in the pathway carbohydrate metabolism; tricarboxylic acid cycle. Its function is as follows. Membrane-anchoring subunit of succinate dehydrogenase (SDH) that is involved in complex II of the mitochondrial electron transport chain and is responsible for transferring electrons from succinate to ubiquinone (coenzyme Q). The chain is Succinate dehydrogenase cytochrome b560 subunit, mitochondrial (sdhC) from Dictyostelium discoideum (Social amoeba).